Consider the following 171-residue polypeptide: Neuronal vesicle trafficking-associated protein 2 (171 aa).

The interval 1–21 (MVKLNGNPGEKGAKPPSVEDG) is disordered. The Cytoplasmic segment spans residues 1–71 (MVKLNGNPGE…FRVPKIAEFT (71 aa)). A helical; Signal-anchor for type II membrane protein membrane pass occupies residues 72 to 92 (VTILVSLALAFLACIVFLVVY). The Lumenal segment spans residues 93-171 (KAFTYDHSCP…EPKPPKTQGH (79 aa)).

The protein belongs to the NSG family.

It is found in the membrane. The protein resides in the golgi apparatus. The protein localises to the trans-Golgi network membrane. It localises to the cell projection. Its subcellular location is the dendrite. It is found in the endosome membrane. The protein resides in the early endosome membrane. The protein localises to the late endosome membrane. It localises to the lysosome lumen. Its subcellular location is the cytoplasmic vesicle membrane. It is found in the golgi stack membrane. The protein resides in the endosome. The protein localises to the multivesicular body membrane. The chain is Neuronal vesicle trafficking-associated protein 2 from Rattus norvegicus (Rat).